Reading from the N-terminus, the 535-residue chain is T-complex protein 1 subunit epsilon (535 aa).

This sequence belongs to the TCP-1 chaperonin family. As to quaternary structure, heterooligomeric complex of about 850 to 900 kDa that forms two stacked rings, 12 to 16 nm in diameter.

It is found in the cytoplasm. Functionally, molecular chaperone; assists the folding of proteins upon ATP hydrolysis. Known to play a role, in vitro, in the folding of actin and tubulin. This Avena sativa (Oat) protein is T-complex protein 1 subunit epsilon.